Here is a 156-residue protein sequence, read N- to C-terminus: MNLNATILGQAIAFVLFVLFCMKYVWPPLMAAIEKRQKEIADGLASAERAHKDLDLAKASATDQLKKAKAEAQVIIEQANKRRAQILDEAKTEAEQERTKIVAQAQAEIDAERKRAREELRKQVAILAVAGAEKIIERSVDEAANSDIVDKLVAEL.

A helical transmembrane segment spans residues 11–31; sequence AIAFVLFVLFCMKYVWPPLMA.

Belongs to the ATPase B chain family. F-type ATPases have 2 components, F(1) - the catalytic core - and F(0) - the membrane proton channel. F(1) has five subunits: alpha(3), beta(3), gamma(1), delta(1), epsilon(1). F(0) has three main subunits: a(1), b(2) and c(10-14). The alpha and beta chains form an alternating ring which encloses part of the gamma chain. F(1) is attached to F(0) by a central stalk formed by the gamma and epsilon chains, while a peripheral stalk is formed by the delta and b chains.

The protein localises to the cell inner membrane. Its function is as follows. F(1)F(0) ATP synthase produces ATP from ADP in the presence of a proton or sodium gradient. F-type ATPases consist of two structural domains, F(1) containing the extramembraneous catalytic core and F(0) containing the membrane proton channel, linked together by a central stalk and a peripheral stalk. During catalysis, ATP synthesis in the catalytic domain of F(1) is coupled via a rotary mechanism of the central stalk subunits to proton translocation. Functionally, component of the F(0) channel, it forms part of the peripheral stalk, linking F(1) to F(0). This Citrobacter koseri (strain ATCC BAA-895 / CDC 4225-83 / SGSC4696) protein is ATP synthase subunit b.